A 144-amino-acid polypeptide reads, in one-letter code: Lysozyme C II (144 aa).

A signal peptide spans 1–15 (MRAVVVLLLVAVASA). The C-type lysozyme domain occupies 16–144 (KVYDRCELAR…LRSYVAGCGV (129 aa)). 4 cysteine pairs are disulfide-bonded: Cys21-Cys142, Cys45-Cys130, Cys79-Cys95, and Cys91-Cys109. Residues Glu50 and Asp67 contribute to the active site.

It is found in the secreted. The catalysed reaction is Hydrolysis of (1-&gt;4)-beta-linkages between N-acetylmuramic acid and N-acetyl-D-glucosamine residues in a peptidoglycan and between N-acetyl-D-glucosamine residues in chitodextrins.. In terms of biological role, lysozymes have primarily a bacteriolytic function; those in tissues and body fluids are associated with the monocyte-macrophage system and enhance the activity of immunoagents. Has antibacterial activity against the Gram positive bacterium P.citreus. Has no antibacterial activity against the Gram negative bacteria E.coli and Y.ruckeri. Does not have hemolytic activity against trout erythrocytes. This is Lysozyme C II from Oncorhynchus mykiss (Rainbow trout).